The sequence spans 84 residues: Cytochrome b559 subunit alpha (84 aa).

Residues 24–38 (IIHAVTLPAIFIAGF) form a helical membrane-spanning segment. Residue histidine 26 coordinates heme.

The protein belongs to the PsbE/PsbF family. In terms of assembly, heterodimer of an alpha subunit and a beta subunit. PSII is composed of 1 copy each of membrane proteins PsbA, PsbB, PsbC, PsbD, PsbE, PsbF, PsbH, PsbI, PsbJ, PsbK, PsbL, PsbM, PsbT, PsbX, PsbY, Psb30/Ycf12, peripheral proteins PsbO, CyanoQ (PsbQ), PsbU, PsbV and a large number of cofactors. It forms dimeric complexes. It depends on heme b as a cofactor.

It is found in the cellular thylakoid membrane. Its function is as follows. This b-type cytochrome is tightly associated with the reaction center of photosystem II (PSII). PSII is a light-driven water:plastoquinone oxidoreductase that uses light energy to abstract electrons from H(2)O, generating O(2) and a proton gradient subsequently used for ATP formation. It consists of a core antenna complex that captures photons, and an electron transfer chain that converts photonic excitation into a charge separation. This is Cytochrome b559 subunit alpha from Prochlorococcus marinus subsp. pastoris (strain CCMP1986 / NIES-2087 / MED4).